The chain runs to 473 residues: Sulfate adenylyltransferase subunit 1 (473 aa).

Residues 19–238 enclose the tr-type G domain; the sequence is KTLLKFLTCG…IKIKNSISSE (220 aa). Residues 28-35 are G1; sequence GSVDDGKS. 28 to 35 provides a ligand contact to GTP; the sequence is GSVDDGKS. The interval 86 to 90 is G2; it reads GITID. The G3 stretch occupies residues 107 to 110; that stretch reads DTPG. Residues 107–111 and 162–165 contribute to the GTP site; these read DTPGH and NKMD. The interval 162–165 is G4; that stretch reads NKMD. The interval 200–202 is G5; it reads SAL.

It belongs to the TRAFAC class translation factor GTPase superfamily. Classic translation factor GTPase family. CysN/NodQ subfamily. As to quaternary structure, heterodimer composed of CysD, the smaller subunit, and CysN.

The enzyme catalyses sulfate + ATP + H(+) = adenosine 5'-phosphosulfate + diphosphate. The protein operates within sulfur metabolism; hydrogen sulfide biosynthesis; sulfite from sulfate: step 1/3. Its function is as follows. With CysD forms the ATP sulfurylase (ATPS) that catalyzes the adenylation of sulfate producing adenosine 5'-phosphosulfate (APS) and diphosphate, the first enzymatic step in sulfur assimilation pathway. APS synthesis involves the formation of a high-energy phosphoric-sulfuric acid anhydride bond driven by GTP hydrolysis by CysN coupled to ATP hydrolysis by CysD. The polypeptide is Sulfate adenylyltransferase subunit 1 (Buchnera aphidicola subsp. Acyrthosiphon pisum (strain APS) (Acyrthosiphon pisum symbiotic bacterium)).